The chain runs to 130 residues: Glycine cleavage system H protein (130 aa).

The Lipoyl-binding domain maps to 24 to 106 (EYTVGITEHA…YHEGWLFRIK (83 aa)). N6-lipoyllysine is present on Lys65.

This sequence belongs to the GcvH family. In terms of assembly, the glycine cleavage system is composed of four proteins: P, T, L and H. Requires (R)-lipoate as cofactor.

The glycine cleavage system catalyzes the degradation of glycine. The H protein shuttles the methylamine group of glycine from the P protein to the T protein. The sequence is that of Glycine cleavage system H protein from Photorhabdus laumondii subsp. laumondii (strain DSM 15139 / CIP 105565 / TT01) (Photorhabdus luminescens subsp. laumondii).